The chain runs to 145 residues: MSQKAIKGYINLIIPAAGATPAPPIGPALGQRKVNIAAFCKDFNDATQAMEKGIPLPTVITVYEDRSFSFKIKTSPASYFLKKYAKITKGSSATKKEAVVGKVTMDDCREIAKLKMPDLNTKNIEAATKIICGSAASMGLEVVGN.

The protein belongs to the universal ribosomal protein uL11 family. As to quaternary structure, part of the ribosomal stalk of the 50S ribosomal subunit. Interacts with L10 and the large rRNA to form the base of the stalk. L10 forms an elongated spine to which L12 dimers bind in a sequential fashion forming a multimeric L10(L12)X complex. In terms of processing, one or more lysine residues are methylated.

Its function is as follows. Forms part of the ribosomal stalk which helps the ribosome interact with GTP-bound translation factors. This is Large ribosomal subunit protein uL11 from Rickettsia canadensis (strain McKiel).